The primary structure comprises 160 residues: Small ribosomal subunit protein uS7 (160 aa).

It belongs to the universal ribosomal protein uS7 family. In terms of assembly, part of the 30S ribosomal subunit. Contacts proteins S9 and S11.

One of the primary rRNA binding proteins, it binds directly to 16S rRNA where it nucleates assembly of the head domain of the 30S subunit. Is located at the subunit interface close to the decoding center, probably blocks exit of the E-site tRNA. This chain is Small ribosomal subunit protein uS7, found in Rickettsia rickettsii (strain Iowa).